A 349-amino-acid polypeptide reads, in one-letter code: MYTPIPQSGSPFPASVQDPGLHIWRVEKLKPVPIARENHGIFFSGDSYLVLHNGPEEASHLHLWIGQQSSRDEQGACAVLAVHLNTLLGERPVQHREVQGNESDLFMSYFPQGLKYREGGVESAFHKTTSGTTPAAIRKLYQVKGKKNIRATERALSWDSFNTGDCFILDLGQNIFAWCGGKSNILERNKARDLALAIRDSERQGKAQVEIITDGEEPAEMIQVLGPKPALKEGNPEEDITADQTNAQAAALYKVSDATGQMNLTKVADSSPFASELLIPDDCFVLDNGLCGKIYIWKGRKANEKERQAALQVADGFISRMRYSPNTQVEILPQGRESPIFKQFFKDWK.

Met1 bears the N-acetylmethionine mark. 3 Gelsolin-like repeats span residues 28–107 (KLKP…DLFM), 147–222 (KNIR…AEMI), and 264–342 (LTKV…PIFK). Residues 138–147 (RKLYQVKGKK) carry the Nuclear localization signal motif. Phosphoserine is present on Ser338.

It belongs to the villin/gelsolin family. As to quaternary structure, interacts with NUP62. Interacts with NUTF2 and RAN; involved in CAPG nuclear import. In terms of processing, phosphorylated.

It is found in the nucleus. It localises to the cytoplasm. Its subcellular location is the melanosome. The protein resides in the cell projection. The protein localises to the lamellipodium. It is found in the ruffle. In terms of biological role, calcium-sensitive protein which reversibly blocks the barbed ends of actin filaments but does not sever preformed actin filaments. May play an important role in macrophage function. May play a role in regulating cytoplasmic and/or nuclear structures through potential interactions with actin. May bind DNA. Uncapping occurs either when Ca(2+) falls or when the concentration of polyphosphoinositide rises, both at low and high Ca(2+). This is Macrophage-capping protein (Capg) from Rattus norvegicus (Rat).